Reading from the N-terminus, the 345-residue chain is Nicotinate-nucleotide--dimethylbenzimidazole phosphoribosyltransferase (345 aa).

Catalysis depends on Glu-312, which acts as the Proton acceptor.

The protein belongs to the CobT family.

It carries out the reaction 5,6-dimethylbenzimidazole + nicotinate beta-D-ribonucleotide = alpha-ribazole 5'-phosphate + nicotinate + H(+). It participates in nucleoside biosynthesis; alpha-ribazole biosynthesis; alpha-ribazole from 5,6-dimethylbenzimidazole: step 1/2. In terms of biological role, catalyzes the synthesis of alpha-ribazole-5'-phosphate from nicotinate mononucleotide (NAMN) and 5,6-dimethylbenzimidazole (DMB). The protein is Nicotinate-nucleotide--dimethylbenzimidazole phosphoribosyltransferase of Phocaeicola vulgatus (strain ATCC 8482 / DSM 1447 / JCM 5826 / CCUG 4940 / NBRC 14291 / NCTC 11154) (Bacteroides vulgatus).